We begin with the raw amino-acid sequence, 159 residues long: Ribonuclease H (159 aa).

An RNase H type-1 domain is found at 8 to 150 (NLKEITMYTD…CDQLAVAAAK (143 aa)). 4 residues coordinate Mg(2+): Asp-17, Glu-55, Asp-77, and Asp-142.

The protein belongs to the RNase H family. As to quaternary structure, monomer. The cofactor is Mg(2+).

It is found in the cytoplasm. The enzyme catalyses Endonucleolytic cleavage to 5'-phosphomonoester.. Endonuclease that specifically degrades the RNA of RNA-DNA hybrids. The chain is Ribonuclease H from Desulforamulus reducens (strain ATCC BAA-1160 / DSM 100696 / MI-1) (Desulfotomaculum reducens).